Consider the following 316-residue polypeptide: Retinol dehydrogenase 7 (316 aa).

33-57 (FITGCDSGFGNLLARQLDRRGMRVL) provides a ligand contact to NADP(+). Ser163 lines the substrate pocket. Tyr175 acts as the Proton acceptor in catalysis.

Belongs to the short-chain dehydrogenases/reductases (SDR) family. As to expression, highly expressed in liver. Also expressed in lung, eye, kidney, and brain.

It is found in the microsome. The protein localises to the endoplasmic reticulum. It carries out the reaction all-trans-retinol--[retinol-binding protein] + NAD(+) = all-trans-retinal--[retinol-binding protein] + NADH + H(+). The protein operates within cofactor metabolism; retinol metabolism. Its function is as follows. Acts on androgens and retinols, i.e. has steroid 3-alpha- and 17-beta-dehydrogenase and cis/trans-retinol catalytic activities. The protein is Retinol dehydrogenase 7 (Rdh7) of Mus musculus (Mouse).